Consider the following 156-residue polypeptide: SsrA-binding protein (156 aa).

The segment at 130–156 (KFDKRDDLKKKDAKRDIDRALRDKQKY) is disordered. The segment covering 132–156 (DKRDDLKKKDAKRDIDRALRDKQKY) has biased composition (basic and acidic residues).

The protein belongs to the SmpB family.

The protein localises to the cytoplasm. In terms of biological role, required for rescue of stalled ribosomes mediated by trans-translation. Binds to transfer-messenger RNA (tmRNA), required for stable association of tmRNA with ribosomes. tmRNA and SmpB together mimic tRNA shape, replacing the anticodon stem-loop with SmpB. tmRNA is encoded by the ssrA gene; the 2 termini fold to resemble tRNA(Ala) and it encodes a 'tag peptide', a short internal open reading frame. During trans-translation Ala-aminoacylated tmRNA acts like a tRNA, entering the A-site of stalled ribosomes, displacing the stalled mRNA. The ribosome then switches to translate the ORF on the tmRNA; the nascent peptide is terminated with the 'tag peptide' encoded by the tmRNA and targeted for degradation. The ribosome is freed to recommence translation, which seems to be the essential function of trans-translation. This chain is SsrA-binding protein, found in Exiguobacterium sibiricum (strain DSM 17290 / CCUG 55495 / CIP 109462 / JCM 13490 / 255-15).